Reading from the N-terminus, the 304-residue chain is Beta-lactamase-like protein str6 (304 aa).

It belongs to the beta-lactamase family.

It participates in mycotoxin biosynthesis. In terms of biological role, beta-lactamase-like protein; part of the gene cluster that mediates the biosynthesis of strobilurin A, an antifungal polyketide that contains a key beta-methoxyacrylate toxophore that targets the complex III of the mitochondrial electron transport chain. Strobilurin biosynthesis begins with construction of benzoyl CoA by step-wise elimination of ammonia from phenylalanine by the phenylalanine ammonia-lyase str11, oxygenation by str8 and retro-Claisen reaction to form benzoic acid, which is activated to its CoA thiolester benzoyl CoA by the dedicated CoA ligase str10. Benzoyl CoA forms the starter unit for the highly reducing polyketide synthase stpks1 that produces the polyketide prestrobilutin A. The FAD-dependent oxygenase str9 then catalyzes the key oxidative rearrangement responsible for the creation of the beta-methoxyacrylate toxophore. Str9 performs epoxidation of the 2,3 olefin of prestrobilutin A, followed by Meinwald rearrangement to furnish the aldehyde intermediate. Rapid enolization of the aldehyde intermediate would give the beta-methoxyacrylate skeleton and methylations catalyzed by str2 and str3 complete the synthesis and lead to the production of strobilurin A. The short-chain dehydrogenase stl2 and the dehydrogenase str4 play a role in the shunt pathway leading to the production of bolineol. The cluster encodes no obvious halogenase gene that could be involved in production of strobilurin B, nor any obvious dimethylallyl-transferase that could be involved in the production of strobilurin G. It is possible that unknown proteins encoded in, or near, the cluster (such as str1 or stl1) may form new classes of halogenases or dimethylally-transferases, or that the responsible genes are located elsewhere on the genome. Similarly, proteins encoded by str5/str6 hydrolases appear to have no chemical role in the biosynthesis of strobilurin A. Finally, no obvious self-resistance gene is found within the cluster. The polypeptide is Beta-lactamase-like protein str6 (Strobilurus tenacellus).